Reading from the N-terminus, the 288-residue chain is DegV domain-containing protein SAS0714 (288 aa).

Residues 3–282 (IAVMTDSTSY…SGGLGLGYVG (280 aa)) form the DegV domain. Hexadecanoate-binding residues include threonine 62 and serine 95.

May bind long-chain fatty acids, such as palmitate, and may play a role in lipid transport or fatty acid metabolism. The sequence is that of DegV domain-containing protein SAS0714 from Staphylococcus aureus (strain MSSA476).